We begin with the raw amino-acid sequence, 701 residues long: Probable cytosolic oligopeptidase A (701 aa).

An N-acetylalanine modification is found at Ala-2. The stretch at 148-194 (IALEDDKREEFNKIEQELEKLSHKFSENVLDATKKFEKLITDKKEIE) forms a coiled coil. Residue His-483 coordinates Zn(2+). Glu-484 is an active-site residue. Zn(2+) is bound by residues His-487 and Glu-513. A substrate-binding site is contributed by 615-621 (HIFAGGY).

This sequence belongs to the peptidase M3 family. It depends on Zn(2+) as a cofactor.

It is found in the cytoplasm. It localises to the cytosol. The enzyme catalyses Hydrolysis of oligopeptides, with broad specificity. Gly or Ala commonly occur as P1 or P1' residues, but more distant residues are also important, as is shown by the fact that Z-Gly-Pro-Gly-|-Gly-Pro-Ala is cleaved, but not Z-(Gly)(5).. Inhibited by salicylic acid. Its function is as follows. Oligopeptidase that may be involved in the degradation of proteasome-generated peptides. Binds salicylic acid. This chain is Probable cytosolic oligopeptidase A, found in Arabidopsis thaliana (Mouse-ear cress).